Consider the following 280-residue polypeptide: uncharacterized protein (280 aa).

Residues 1-26 (MNILIKSAVKNFIVFSTALYTSFSFA) form the signal peptide.

This sequence to E.coli YibQ.

This is an uncharacterized protein from Haemophilus influenzae (strain ATCC 51907 / DSM 11121 / KW20 / Rd).